Reading from the N-terminus, the 414-residue chain is Gamma-glutamyl phosphate reductase (414 aa).

Belongs to the gamma-glutamyl phosphate reductase family.

Its subcellular location is the cytoplasm. The enzyme catalyses L-glutamate 5-semialdehyde + phosphate + NADP(+) = L-glutamyl 5-phosphate + NADPH + H(+). The protein operates within amino-acid biosynthesis; L-proline biosynthesis; L-glutamate 5-semialdehyde from L-glutamate: step 2/2. In terms of biological role, catalyzes the NADPH-dependent reduction of L-glutamate 5-phosphate into L-glutamate 5-semialdehyde and phosphate. The product spontaneously undergoes cyclization to form 1-pyrroline-5-carboxylate. The protein is Gamma-glutamyl phosphate reductase of Thermoanaerobacter pseudethanolicus (strain ATCC 33223 / 39E) (Clostridium thermohydrosulfuricum).